The following is a 169-amino-acid chain: Cytochrome c oxidase subunit 4 isoform 1, mitochondrial (169 aa).

Residues 1-22 (MLASRALSLIGKRAISTSVCLR) constitute a mitochondrion transit peptide. Topologically, residues 23–99 (AHGSVVKSED…FAEMNRGTNE (77 aa)) are mitochondrial matrix. Lysine 29 bears the N6-acetyllysine; alternate mark. Lysine 29 is modified (N6-succinyllysine; alternate). Residues serine 56 and serine 58 each carry the phosphoserine modification. Lysine 60 bears the N6-acetyllysine; alternate mark. At lysine 60 the chain carries N6-succinyllysine; alternate. Residue lysine 67 is modified to N6-acetyllysine. Residues 100–125 (WKTVVGMAMFFIGFTALVLIWEKSYV) form a helical membrane-spanning segment. Topologically, residues 126-169 (YGPIPHTFDRDWVAMQTKRMLDMKANPIQGFSAKWDYDKNEWKK) are mitochondrial intermembrane.

This sequence belongs to the cytochrome c oxidase IV family. In terms of assembly, component of the cytochrome c oxidase (complex IV, CIV), a multisubunit enzyme composed of 14 subunits. The complex is composed of a catalytic core of 3 subunits MT-CO1, MT-CO2 and MT-CO3, encoded in the mitochondrial DNA, and 11 supernumerary subunits COX4I, COX5A, COX5B, COX6A, COX6B, COX6C, COX7A, COX7B, COX7C, COX8 and NDUFA4, which are encoded in the nuclear genome. The complex exists as a monomer or a dimer and forms supercomplexes (SCs) in the inner mitochondrial membrane with NADH-ubiquinone oxidoreductase (complex I, CI) and ubiquinol-cytochrome c oxidoreductase (cytochrome b-c1 complex, complex III, CIII), resulting in different assemblies (supercomplex SCI(1)III(2)IV(1) and megacomplex MCI(2)III(2)IV(2)). Interacts with PHB2; the interaction decreases in absence of SPHK2. Interacts with AFG1L. Interacts with ABCB7; this interaction allows the regulation of cellular iron homeostasis and cellular reactive oxygen species (ROS) levels in cardiomyocytes. Interacts with FLVCR2; this interaction occurs in the absence of heme and is disrupted upon heme binding. Interacts with IRGC.

The protein localises to the mitochondrion inner membrane. Its pathway is energy metabolism; oxidative phosphorylation. Component of the cytochrome c oxidase, the last enzyme in the mitochondrial electron transport chain which drives oxidative phosphorylation. The respiratory chain contains 3 multisubunit complexes succinate dehydrogenase (complex II, CII), ubiquinol-cytochrome c oxidoreductase (cytochrome b-c1 complex, complex III, CIII) and cytochrome c oxidase (complex IV, CIV), that cooperate to transfer electrons derived from NADH and succinate to molecular oxygen, creating an electrochemical gradient over the inner membrane that drives transmembrane transport and the ATP synthase. Cytochrome c oxidase is the component of the respiratory chain that catalyzes the reduction of oxygen to water. Electrons originating from reduced cytochrome c in the intermembrane space (IMS) are transferred via the dinuclear copper A center (CU(A)) of subunit 2 and heme A of subunit 1 to the active site in subunit 1, a binuclear center (BNC) formed by heme A3 and copper B (CU(B)). The BNC reduces molecular oxygen to 2 water molecules using 4 electrons from cytochrome c in the IMS and 4 protons from the mitochondrial matrix. The sequence is that of Cytochrome c oxidase subunit 4 isoform 1, mitochondrial (Cox4i1) from Mus musculus (Mouse).